Consider the following 539-residue polypeptide: 2-isopropylmalate synthase (539 aa).

The Pyruvate carboxyltransferase domain maps to 8 to 269 (VLIFDTTLRD…YFNPFFGRPP (262 aa)). Residues Asp-17, His-208, His-210, and Asn-244 each contribute to the Mn(2+) site. Residues 408 to 539 (QLKLVQVSCG…DLAKVDKKGI (132 aa)) are regulatory domain.

This sequence belongs to the alpha-IPM synthase/homocitrate synthase family. LeuA type 1 subfamily. Homodimer. Requires Mn(2+) as cofactor.

The protein resides in the cytoplasm. It catalyses the reaction 3-methyl-2-oxobutanoate + acetyl-CoA + H2O = (2S)-2-isopropylmalate + CoA + H(+). The protein operates within amino-acid biosynthesis; L-leucine biosynthesis; L-leucine from 3-methyl-2-oxobutanoate: step 1/4. Catalyzes the condensation of the acetyl group of acetyl-CoA with 3-methyl-2-oxobutanoate (2-ketoisovalerate) to form 3-carboxy-3-hydroxy-4-methylpentanoate (2-isopropylmalate). The chain is 2-isopropylmalate synthase from Prochlorococcus marinus (strain NATL1A).